The sequence spans 496 residues: MELVVKSVSPETLKTATLVVAVGEGRKLGAAARQVDELSGGAISAVLKRGDLAGKVGQSLLLHSLPNLKAERVLLVGVGKDEELGDRPFRKIVAGILNTLKGLGGSDAVLALDEIIVKNRDSYGKTRLLAETLVDGEYTFDQFKSQKAEPRALKKITLLTIKAAQAEVQRAVNHATAIANGMAFTRNLGNLPPNICHPTFLGEQAKNLGKEFKDLKVEVLDEKKIKSLGMGSFYAVGQGSAQPPRLIVMQYNGGKKSEKPYALVGKGITFDTGGISLKPGAGMDEMKYDMGGAASVFGTLRAVLELKLPINLVCILACAENMPSGTASRPGDIVTTMSGQTVEILNTDAEGRLVLCDALTYSERFKPQAVIDIATLTGACVVALGAHTSGLLGNNDELIEQLLSAGKAADDRAWQLPLFDEYQEQLDSPFADIANIGGPKAGTITAACFLSRFTKNLNWAHLDIAGTAWTSGGKDKGATGRPVPLLTQYLLDRAKA.

Mn(2+) is bound by residues Lys266 and Asp271. The active site involves Lys278. Residues Asp289, Asp348, and Glu350 each contribute to the Mn(2+) site. Arg352 is a catalytic residue.

This sequence belongs to the peptidase M17 family. The cofactor is Mn(2+).

Its subcellular location is the cytoplasm. It catalyses the reaction Release of an N-terminal amino acid, Xaa-|-Yaa-, in which Xaa is preferably Leu, but may be other amino acids including Pro although not Arg or Lys, and Yaa may be Pro. Amino acid amides and methyl esters are also readily hydrolyzed, but rates on arylamides are exceedingly low.. It carries out the reaction Release of an N-terminal amino acid, preferentially leucine, but not glutamic or aspartic acids.. In terms of biological role, presumably involved in the processing and regular turnover of intracellular proteins. Catalyzes the removal of unsubstituted N-terminal amino acids from various peptides. The chain is Probable cytosol aminopeptidase from Pseudomonas fluorescens (strain Pf0-1).